We begin with the raw amino-acid sequence, 121 residues long: MSITKDQIIEGVAALSVMEIVELISAMEEKFGVSAAAAVAGPAAAAEAVEEKTEFDVVLKAIGANKVAVIKAVRGATGLGLKEAKDLVESAPAALKEGISKDDAEALKKVLEEAGAEVEVK.

This sequence belongs to the bacterial ribosomal protein bL12 family. Homodimer. Part of the ribosomal stalk of the 50S ribosomal subunit. Forms a multimeric L10(L12)X complex, where L10 forms an elongated spine to which 2 to 4 L12 dimers bind in a sequential fashion. Binds GTP-bound translation factors.

Its function is as follows. Forms part of the ribosomal stalk which helps the ribosome interact with GTP-bound translation factors. Is thus essential for accurate translation. The protein is Large ribosomal subunit protein bL12 of Erwinia tasmaniensis (strain DSM 17950 / CFBP 7177 / CIP 109463 / NCPPB 4357 / Et1/99).